The sequence spans 431 residues: Adenylosuccinate synthetase (431 aa).

GTP is bound by residues G12–K18 and G40–T42. The active-site Proton acceptor is the D13. Residues D13 and G40 each coordinate Mg(2+). Residues D13–K16, N38–H41, T131, R145, Q225, T240, and R304 contribute to the IMP site. Residue H41 is the Proton donor of the active site. V300–R306 contributes to the substrate binding site. Residues R306, K332–D334, and S414–S416 each bind GTP.

It belongs to the adenylosuccinate synthetase family. As to quaternary structure, homodimer. Requires Mg(2+) as cofactor.

Its subcellular location is the cytoplasm. The catalysed reaction is IMP + L-aspartate + GTP = N(6)-(1,2-dicarboxyethyl)-AMP + GDP + phosphate + 2 H(+). Its pathway is purine metabolism; AMP biosynthesis via de novo pathway; AMP from IMP: step 1/2. Plays an important role in the de novo pathway of purine nucleotide biosynthesis. Catalyzes the first committed step in the biosynthesis of AMP from IMP. The protein is Adenylosuccinate synthetase of Beijerinckia indica subsp. indica (strain ATCC 9039 / DSM 1715 / NCIMB 8712).